The primary structure comprises 411 residues: LL-diaminopimelate aminotransferase (411 aa).

2 residues coordinate substrate: Tyr15 and Gly42. Residues Tyr72, 108 to 109, Tyr132, Asn187, Tyr218, and 246 to 248 contribute to the pyridoxal 5'-phosphate site; these read SK and SFS. 3 residues coordinate substrate: Lys109, Tyr132, and Asn187. Lys249 is modified (N6-(pyridoxal phosphate)lysine). Arg257 and Asn292 together coordinate pyridoxal 5'-phosphate. Substrate is bound by residues Asn292 and Arg388.

Belongs to the class-I pyridoxal-phosphate-dependent aminotransferase family. LL-diaminopimelate aminotransferase subfamily. As to quaternary structure, homodimer. Requires pyridoxal 5'-phosphate as cofactor.

The catalysed reaction is (2S,6S)-2,6-diaminopimelate + 2-oxoglutarate = (S)-2,3,4,5-tetrahydrodipicolinate + L-glutamate + H2O + H(+). The protein operates within amino-acid biosynthesis; L-lysine biosynthesis via DAP pathway; LL-2,6-diaminopimelate from (S)-tetrahydrodipicolinate (aminotransferase route): step 1/1. In terms of biological role, involved in the synthesis of meso-diaminopimelate (m-DAP or DL-DAP), required for both lysine and peptidoglycan biosynthesis. Catalyzes the direct conversion of tetrahydrodipicolinate to LL-diaminopimelate. The polypeptide is LL-diaminopimelate aminotransferase (Synechococcus elongatus (strain ATCC 33912 / PCC 7942 / FACHB-805) (Anacystis nidulans R2)).